Here is a 129-residue protein sequence, read N- to C-terminus: RxLR effector protein SFI6 (129 aa).

The first 16 residues, 1 to 16 (MTLVVLATGLLASGTA), serve as a signal peptide directing secretion. Residues 42-64 (RFLRSHQITDDKVEINEHGEEER) carry the RxLR-dEER motif.

It belongs to the RxLR effector family.

It is found in the secreted. The protein resides in the host cytoplasm. The protein localises to the host cell membrane. Functionally, effector that suppresses flg22-induced post-translational MAP kinase activation in tomato but not in Arabidopsis. The perception of highly conserved pathogen- or microbe-associated molecular patterns (PAMPs/MAMPs), such as flg22, triggers converging signaling pathways recruiting MAP kinase cascades and inducing transcriptional re-programming, yielding a generic antimicrobial response. This chain is RxLR effector protein SFI6, found in Phytophthora infestans (strain T30-4) (Potato late blight agent).